We begin with the raw amino-acid sequence, 96 residues long: Co-chaperonin GroES (96 aa).

It belongs to the GroES chaperonin family. Heptamer of 7 subunits arranged in a ring. Interacts with the chaperonin GroEL.

The protein resides in the cytoplasm. In terms of biological role, together with the chaperonin GroEL, plays an essential role in assisting protein folding. The GroEL-GroES system forms a nano-cage that allows encapsulation of the non-native substrate proteins and provides a physical environment optimized to promote and accelerate protein folding. GroES binds to the apical surface of the GroEL ring, thereby capping the opening of the GroEL channel. The sequence is that of Co-chaperonin GroES from Hahella chejuensis (strain KCTC 2396).